Consider the following 160-residue polypeptide: Cyanate hydratase (160 aa).

Active-site residues include Arg100, Glu103, and Ser126.

Belongs to the cyanase family.

It carries out the reaction cyanate + hydrogencarbonate + 3 H(+) = NH4(+) + 2 CO2. Functionally, catalyzes the reaction of cyanate with bicarbonate to produce ammonia and carbon dioxide. The sequence is that of Cyanate hydratase from Aspergillus flavus (strain ATCC 200026 / FGSC A1120 / IAM 13836 / NRRL 3357 / JCM 12722 / SRRC 167).